Consider the following 398-residue polypeptide: Probable RNA methyltransferase sce1580 (398 aa).

Positions 1-24 (MRVPEIPEETASPLRAGDPPAQVA) are disordered. Glutamate 140 functions as the Proton acceptor in the catalytic mechanism. One can recognise a Radical SAM core domain in the interval 146-378 (GPARTTLCVS…TLVRRPRGRD (233 aa)). Residues cysteine 153 and cysteine 383 are joined by a disulfide bond. The [4Fe-4S] cluster site is built by cysteine 160, cysteine 164, and cysteine 167. Residues 211–212 (GE), serine 243, 265–267 (SLN), and asparagine 340 each bind S-adenosyl-L-methionine. Cysteine 383 (S-methylcysteine intermediate) is an active-site residue.

This sequence belongs to the radical SAM superfamily. RlmN family. [4Fe-4S] cluster serves as cofactor.

It localises to the cytoplasm. The polypeptide is Probable RNA methyltransferase sce1580 (Sorangium cellulosum (strain So ce56) (Polyangium cellulosum (strain So ce56))).